The sequence spans 474 residues: Replication factor C large subunit (474 aa).

Position 45 to 52 (45 to 52) interacts with ATP; sequence GPPGCGKT. A compositionally biased stretch (basic and acidic residues) spans 415–468; that stretch reads DKKTNNKKGKENKTKNTTKKIKEIKETPKKEEVKEPKKQIEKQKSEKKEPKKQM. Residues 415–474 are disordered; that stretch reads DKKTNNKKGKENKTKNTTKKIKEIKETPKKEEVKEPKKQIEKQKSEKKEPKKQMTLESFF.

It belongs to the activator 1 small subunits family. RfcL subfamily. In terms of assembly, heteromultimer composed of small subunits (RfcS) and large subunits (RfcL).

Part of the RFC clamp loader complex which loads the PCNA sliding clamp onto DNA. The chain is Replication factor C large subunit from Methanococcus aeolicus (strain ATCC BAA-1280 / DSM 17508 / OCM 812 / Nankai-3).